The primary structure comprises 149 residues: Golgi apparatus membrane protein tvp-18 (149 aa).

A glycan (N-linked (GlcNAc...) asparagine) is linked at Asn-11. 4 consecutive transmembrane segments (helical) span residues 18 to 38 (WLGILSMILCFALGIANIFTF), 41 to 61 (IIIVFSVITLCFSFVILFVEV), 84 to 103 (NYTRAAAYGVMAVVVFLSCI), and 108 to 128 (SLLVPGIFLSFTGICYALAAL).

It belongs to the TVP18 family.

It is found in the golgi apparatus membrane. Golgi membrane protein involved in vesicular trafficking. The chain is Golgi apparatus membrane protein tvp-18 (tvp-18) from Neurospora crassa (strain ATCC 24698 / 74-OR23-1A / CBS 708.71 / DSM 1257 / FGSC 987).